A 625-amino-acid polypeptide reads, in one-letter code: UvrABC system protein C (625 aa).

The GIY-YIG domain occupies 26–105; the sequence is LEPGVYFLRD…IKQHQPHFNT (80 aa). Residues 215-250 enclose the UVR domain; that stretch reads GELLEKLATKMLAASENLDFEQAATIRDQIRGLQAL.

The protein belongs to the UvrC family. As to quaternary structure, interacts with UvrB in an incision complex.

Its subcellular location is the cytoplasm. The UvrABC repair system catalyzes the recognition and processing of DNA lesions. UvrC both incises the 5' and 3' sides of the lesion. The N-terminal half is responsible for the 3' incision and the C-terminal half is responsible for the 5' incision. The polypeptide is UvrABC system protein C (Microcystis aeruginosa (strain NIES-843 / IAM M-2473)).